We begin with the raw amino-acid sequence, 437 residues long: Glutamate-1-semialdehyde 2,1-aminomutase (437 aa).

The residue at position 274 (Lys-274) is an N6-(pyridoxal phosphate)lysine.

It belongs to the class-III pyridoxal-phosphate-dependent aminotransferase family. HemL subfamily. Homodimer. Requires pyridoxal 5'-phosphate as cofactor.

The protein resides in the cytoplasm. It catalyses the reaction (S)-4-amino-5-oxopentanoate = 5-aminolevulinate. It functions in the pathway porphyrin-containing compound metabolism; protoporphyrin-IX biosynthesis; 5-aminolevulinate from L-glutamyl-tRNA(Glu): step 2/2. The sequence is that of Glutamate-1-semialdehyde 2,1-aminomutase from Leptothrix cholodnii (strain ATCC 51168 / LMG 8142 / SP-6) (Leptothrix discophora (strain SP-6)).